Here is a 90-residue protein sequence, read N- to C-terminus: Probable Fe(2+)-trafficking protein (90 aa).

Belongs to the Fe(2+)-trafficking protein family.

Its function is as follows. Could be a mediator in iron transactions between iron acquisition and iron-requiring processes, such as synthesis and/or repair of Fe-S clusters in biosynthetic enzymes. The sequence is that of Probable Fe(2+)-trafficking protein from Azotobacter vinelandii (strain DJ / ATCC BAA-1303).